Reading from the N-terminus, the 23-residue chain is Protein YsaE (23 aa).

In Escherichia coli (strain K12), this protein is Protein YsaE.